Reading from the N-terminus, the 351-residue chain is MALSSWIFFLLVHGIVGGSRTCFPGCRCIVDNFGLFHSFSLTKVDCSRVGPHVVPVSIPLDTSYLDLSSNRLKRINESVLSGPGYTTLMNLNLSYNQIVKISYSTFSKLRYLESLDLSHNLLETLPDGSFLYSRLTELDLSSNKIQKVGVGAFTLKSQGRSMTINLANNEIHSIFRGAERPVPNIHSLMLYGNQLLSVPDLHGIPLRHLNLDRNPLSKIEKVSFLGLESLTHLSLSDLPNLREVSPYSFKSLTSLLELDLSNNPNLKSLSSDMFFGLKALQELNLAYSGVASLPKDIMLHLPSMKSITWGENIRCLKTVKESIFHAQKGRVRKEVLLCHDDNGAVPAQDIL.

An N-terminal signal peptide occupies residues 1-17 (MALSSWIFFLLVHGIVG). LRR repeat units lie at residues 59 to 82 (PLDT…VLSG), 85 to 108 (YTTL…TFSK), 109 to 132 (LRYL…SFLY), 134 to 155 (RLTE…AFTL), 158 to 181 (QGRS…AERP), 182 to 203 (VPNI…DLHG), 204 to 226 (IPLR…SFLG), 252 to 276 (LTSL…MFFG), and 277 to 300 (LKAL…IMLH).

As to quaternary structure, interacts with bmp4. Interacts with dll1 (via extracellular region). Interacts with fgf8; inhibits fgf8 signaling. Interacts with nodal2/Xnr2; enhances nodal2 activity. As to expression, during embryogenesis, localized to the animal hemisphere during late blastula and gastrula stages. At stage 10, expression is also detected around the dorsal blastopore lip. Expressed in the mandibular crest segment, branchial crest segment and differentiating somites at stage 21/22. Expressed in the germ ring including the shield at shield stage and in the tailbud at the 10-somite stage. At the early neurula stage (stage 13), expression is hardly detectable in the presumptive neural plate region, and restricted to the non-neural ectoderm where its levels increase by stage 14, especially in the presumptive anterior neural fold. Also expressed in the prospective cranial neural crest. At the early tailbud stage (stage 23), expressed in cranial neural crest cells, the dorsal retina and the lens placode.

It is found in the secreted. Functionally, contributes to various developmental events through its interactions with multiple signaling pathways. Dorsalizing factor which functions as an inhibitor of bone morphogenetic proteins (BMP) during gastrulation. Promotes dll1-dependent activation of Notch signaling and is required for neural crest formation. Induces endoderm and dorsal mesoderm formation by enhancing nodal2/Xnr2 activity while inhibiting ventrolateral mesoderm formation through inhibition of fgf8. The protein is Tsukushi-A of Xenopus laevis (African clawed frog).